The sequence spans 238 residues: 1-(5-phosphoribosyl)-5-[(5-phosphoribosylamino)methylideneamino] imidazole-4-carboxamide isomerase (238 aa).

Aspartate 8 functions as the Proton acceptor in the catalytic mechanism. Aspartate 129 (proton donor) is an active-site residue.

This sequence belongs to the HisA/HisF family.

The protein localises to the cytoplasm. The catalysed reaction is 1-(5-phospho-beta-D-ribosyl)-5-[(5-phospho-beta-D-ribosylamino)methylideneamino]imidazole-4-carboxamide = 5-[(5-phospho-1-deoxy-D-ribulos-1-ylimino)methylamino]-1-(5-phospho-beta-D-ribosyl)imidazole-4-carboxamide. It participates in amino-acid biosynthesis; L-histidine biosynthesis; L-histidine from 5-phospho-alpha-D-ribose 1-diphosphate: step 4/9. This is 1-(5-phosphoribosyl)-5-[(5-phosphoribosylamino)methylideneamino] imidazole-4-carboxamide isomerase from Anaeromyxobacter dehalogenans (strain 2CP-C).